The primary structure comprises 301 residues: Possible hemolysin C (301 aa).

2 consecutive CBS domains span residues 79 to 141 and 144 to 201; these read MVPR…NFRL and LIRK…IDDE.

It belongs to the UPF0053 family. Hemolysin C subfamily.

This is Possible hemolysin C (tlyC) from Rickettsia bellii (strain RML369-C).